The sequence spans 232 residues: Proteasome subunit alpha (232 aa).

The protein belongs to the peptidase T1A family. In terms of assembly, the 20S proteasome core is composed of 14 alpha and 14 beta subunits that assemble into four stacked heptameric rings, resulting in a barrel-shaped structure. The two inner rings, each composed of seven catalytic beta subunits, are sandwiched by two outer rings, each composed of seven alpha subunits. The catalytic chamber with the active sites is on the inside of the barrel. Has a gated structure, the ends of the cylinder being occluded by the N-termini of the alpha-subunits. Is capped by the proteasome-associated ATPase, ARC.

The protein localises to the cytoplasm. The protein operates within protein degradation; proteasomal Pup-dependent pathway. Its activity is regulated as follows. The formation of the proteasomal ATPase ARC-20S proteasome complex, likely via the docking of the C-termini of ARC into the intersubunit pockets in the alpha-rings, may trigger opening of the gate for substrate entry. Interconversion between the open-gate and close-gate conformations leads to a dynamic regulation of the 20S proteasome proteolysis activity. In terms of biological role, component of the proteasome core, a large protease complex with broad specificity involved in protein degradation. The protein is Proteasome subunit alpha of Acidimicrobium ferrooxidans (strain DSM 10331 / JCM 15462 / NBRC 103882 / ICP).